The following is a 441-amino-acid chain: Arginine biosynthesis bifunctional protein ArgJ, mitochondrial (441 aa).

Substrate-binding residues include threonine 177, lysine 203, threonine 214, glutamate 303, asparagine 436, and serine 441. The Nucleophile role is filled by threonine 214.

Belongs to the ArgJ family. In terms of assembly, heterodimer of an alpha and a beta chain. The alpha and beta chains are autoproteolytically processed from a single precursor protein within the mitochondrion.

The protein resides in the mitochondrion matrix. It catalyses the reaction N(2)-acetyl-L-ornithine + L-glutamate = N-acetyl-L-glutamate + L-ornithine. The catalysed reaction is L-glutamate + acetyl-CoA = N-acetyl-L-glutamate + CoA + H(+). It functions in the pathway amino-acid biosynthesis; L-arginine biosynthesis; L-ornithine and N-acetyl-L-glutamate from L-glutamate and N(2)-acetyl-L-ornithine (cyclic): step 1/1. The protein operates within amino-acid biosynthesis; L-arginine biosynthesis; N(2)-acetyl-L-ornithine from L-glutamate: step 1/4. Functionally, catalyzes two activities which are involved in the cyclic version of arginine biosynthesis: the synthesis of acetylglutamate from glutamate and acetyl-CoA, and of ornithine by transacetylation between acetylornithine and glutamate. The polypeptide is Arginine biosynthesis bifunctional protein ArgJ, mitochondrial (Debaryomyces hansenii (strain ATCC 36239 / CBS 767 / BCRC 21394 / JCM 1990 / NBRC 0083 / IGC 2968) (Yeast)).